The chain runs to 91 residues: Acylphosphatase (91 aa).

An Acylphosphatase-like domain is found at 6–91; that stretch reads CMRCYISGRV…WEDYITFDVL (86 aa). Catalysis depends on residues arginine 21 and asparagine 39.

Belongs to the acylphosphatase family.

The enzyme catalyses an acyl phosphate + H2O = a carboxylate + phosphate + H(+). This is Acylphosphatase (acyP) from Legionella pneumophila (strain Lens).